The primary structure comprises 123 residues: U11/U12 small nuclear ribonucleoprotein 25 kDa protein (123 aa).

One can recognise a Ubiquitin-like domain in the interval methionine 32 to lysine 123.

As to quaternary structure, component of the U11/U12 snRNPs that are part of the U12-type spliceosome.

Its subcellular location is the nucleus. The protein is U11/U12 small nuclear ribonucleoprotein 25 kDa protein (SNRNP25) of Bos taurus (Bovine).